A 329-amino-acid polypeptide reads, in one-letter code: DGAT1/2-independent enzyme synthesizing storage lipids (329 aa).

The Lumenal segment spans residues 1–50 (MIDNNQTCAAGQDSVPYVTCMIYVLEEWLGVEQLEDYLNFANHLLWVFTP). Asparagine 5 is a glycosylation site (N-linked (GlcNAc...) asparagine). A helical membrane pass occupies residues 51 to 71 (LILLILPYFTIFLLYLTIIFL). At 72–120 (HIYKRKNVLKEAYSHNLWDGARKTVATLWDGHAAVWHGYEVHGMEKIPE) the chain is on the cytoplasmic side. Residues 121–141 (GAALIIFYHGAIPIDFYYFMA) form a helical membrane-spanning segment. Histidine 129 is a catalytic residue. The Lumenal portion of the chain corresponds to 142–329 (KIFIQKGRTC…DRFHKEQKAH (188 aa)).

It belongs to the diacylglycerol acyltransferase family. Highly divergent. Widely expressed, with highest level in the brain, followed by lung and duodenum, and lowest levels in tongue, testis, skin and ileum.

It is found in the endoplasmic reticulum membrane. It carries out the reaction a 1,2-diacylglycerol + a 1,2-diacyl-sn-glycero-3-phosphocholine = a triacylglycerol + a 1-acyl-sn-glycero-3-phosphocholine. It catalyses the reaction a 1-O-alkyl-2-acyl-sn-glycero-3-phosphocholine + a 1,2-diacylglycerol = a 1-O-alkyl-sn-glycero-3-phosphocholine + a triacylglycerol. The catalysed reaction is a 2-acylglycerol + an acyl-CoA = a 1,2-diacylglycerol + CoA. The enzyme catalyses an acyl-CoA + a 1,2-diacyl-sn-glycerol = a triacyl-sn-glycerol + CoA. It carries out the reaction 2-(9Z-octadecenoyl)-glycerol + (9Z)-octadecenoyl-CoA = 1,2-di-(9Z-octadecenoyl)-glycerol + CoA. It catalyses the reaction 1,2-di-(9Z-octadecenoyl)-sn-glycerol + (9Z)-octadecenoyl-CoA = 1,2,3-tri-(9Z-octadecenoyl)-glycerol + CoA. Its activity is regulated as follows. Acyltransferase activity is specifically inhibited by TMX1 at the endoplasmic reticulum, restricting accumulation of triacylglycerol. Functionally, catalytic subunit of the alternative triglyceride biosynthesis pathway, which mediates formation of triacylglycerol from diacylglycerol and membrane phospholipids. Synthesizes triacylglycerol at the expense of membrane phospholipids, such as phosphatidylcholine (PC) and its ether-linked form (ePC), thereby altering the composition of membranes. The alternative triglyceride biosynthesis pathway is probably required to provide the energy required for rapid growth when fuel sources are limiting. It maintains mitochondrial function during periods of extracellular lipid starvation. Can also use acyl-CoA as donor: acts as a acyl-CoA:monoacylglycerol acyltransferase (MGAT), but also shows acyl-CoA:diacylglycerol acyltransferase (DGAT) activity. This Mus musculus (Mouse) protein is DGAT1/2-independent enzyme synthesizing storage lipids.